We begin with the raw amino-acid sequence, 682 residues long: Potassium-transporting ATPase ATP-binding subunit (682 aa).

The next 4 helical transmembrane spans lie at 34-54 (PVMFIVWIGSLLTTCISIAMA), 62-82 (ALFSAAISGWLWITVLFANFA), 219-239 (IALTILLIALTIVFLLATATL), and 254-274 (VLVALLVCLIPTTIGGLLSAI). The active-site 4-aspartylphosphate intermediate is Asp-307. Residues Asp-344, Glu-348, 377–384 (FTAQSRMS), and Lys-395 contribute to the ATP site. Residues Asp-518 and Asp-522 each contribute to the Mg(2+) site. 3 helical membrane-spanning segments follow: residues 588–608 (FAIIPAAFAATYPQLNALNIM), 616–636 (AILSAVIFNALIIVFLIPLAL), and 656–676 (IYGLGGLLVPFIGIKVIDLLL).

It belongs to the cation transport ATPase (P-type) (TC 3.A.3) family. Type IA subfamily. As to quaternary structure, the system is composed of three essential subunits: KdpA, KdpB and KdpC.

It is found in the cell inner membrane. It catalyses the reaction K(+)(out) + ATP + H2O = K(+)(in) + ADP + phosphate + H(+). Part of the high-affinity ATP-driven potassium transport (or Kdp) system, which catalyzes the hydrolysis of ATP coupled with the electrogenic transport of potassium into the cytoplasm. This subunit is responsible for energy coupling to the transport system and for the release of the potassium ions to the cytoplasm. This Escherichia coli O9:H4 (strain HS) protein is Potassium-transporting ATPase ATP-binding subunit.